A 360-amino-acid chain; its full sequence is Phospho-N-acetylmuramoyl-pentapeptide-transferase (360 aa).

10 helical membrane passes run 21–41 (YITF…LWIG), 73–93 (TMGG…WADL), 98–118 (IWFV…DDYW), 132–152 (WKYF…YAVG), 168–188 (VMPQ…VGTS), 199–219 (GLAI…AWAT), 236–256 (AGEL…FLWY), 263–283 (VFMG…IAVL), 288–308 (LLLV…ILQV), and 338–358 (VIVR…VTLK).

The protein belongs to the glycosyltransferase 4 family. MraY subfamily. The cofactor is Mg(2+).

The protein localises to the cell inner membrane. It carries out the reaction UDP-N-acetyl-alpha-D-muramoyl-L-alanyl-gamma-D-glutamyl-meso-2,6-diaminopimeloyl-D-alanyl-D-alanine + di-trans,octa-cis-undecaprenyl phosphate = di-trans,octa-cis-undecaprenyl diphospho-N-acetyl-alpha-D-muramoyl-L-alanyl-D-glutamyl-meso-2,6-diaminopimeloyl-D-alanyl-D-alanine + UMP. It functions in the pathway cell wall biogenesis; peptidoglycan biosynthesis. In terms of biological role, catalyzes the initial step of the lipid cycle reactions in the biosynthesis of the cell wall peptidoglycan: transfers peptidoglycan precursor phospho-MurNAc-pentapeptide from UDP-MurNAc-pentapeptide onto the lipid carrier undecaprenyl phosphate, yielding undecaprenyl-pyrophosphoryl-MurNAc-pentapeptide, known as lipid I. In Actinobacillus pleuropneumoniae serotype 5b (strain L20), this protein is Phospho-N-acetylmuramoyl-pentapeptide-transferase.